We begin with the raw amino-acid sequence, 448 residues long: Glutamyl-tRNA(Gln) amidotransferase subunit D (448 aa).

The Asparaginase/glutaminase domain occupies 92-423 (SEVKIISTGG…DKIRSLMLTN (332 aa)). Catalysis depends on residues Thr-102, Thr-178, Asp-179, and Lys-257.

This sequence belongs to the asparaginase 1 family. GatD subfamily. Heterodimer of GatD and GatE.

The catalysed reaction is L-glutamyl-tRNA(Gln) + L-glutamine + ATP + H2O = L-glutaminyl-tRNA(Gln) + L-glutamate + ADP + phosphate + H(+). Functionally, allows the formation of correctly charged Gln-tRNA(Gln) through the transamidation of misacylated Glu-tRNA(Gln) in organisms which lack glutaminyl-tRNA synthetase. The reaction takes place in the presence of glutamine and ATP through an activated gamma-phospho-Glu-tRNA(Gln). The GatDE system is specific for glutamate and does not act on aspartate. The chain is Glutamyl-tRNA(Gln) amidotransferase subunit D from Sulfurisphaera tokodaii (strain DSM 16993 / JCM 10545 / NBRC 100140 / 7) (Sulfolobus tokodaii).